The following is a 168-amino-acid chain: Pleiotrophin (168 aa).

Residues 1 to 32 (MQTPQYLQQRRKFAAAFLAFIFILAAVDTAEA) form the signal peptide. Intrachain disulfides connect Cys47/Cys76, Cys55/Cys85, Cys62/Cys89, Cys99/Cys131, and Cys109/Cys141. Chondroitin sulfate binding stretches follow at residues 92–99 (KKQFGAEC) and 123–131 (KRALHNADC). The segment at 141 to 168 (CGKLTKSKPQAESKKKKKEGKKQEKMLD) is disordered. Positions 147–168 (SKPQAESKKKKKEGKKQEKMLD) are chondroitin sulfate A binding.

In terms of assembly, interacts with ALK and NEK6. Interacts with PTPRZ1 (via chondroitin sulfate groups); promotes formation of homooligomers; oligomerization impairs tyrosine phosphatase activity. Forms a complex with PTPRZ1 and CTNNB1; this complex inactivates PTPRZ1 protein tyrosine phosphatase activity through PTN interaction and stimulates tyrosine phosphorylation of CTNNB1. Interacts with ITGB3 and ITGA5. Forms a complex with PTPRZ1 and integrin alpha-V/beta-3 (ITGAV:ITGB3) that stimulates endothelial cell migration through ITGB3 'Tyr-773' phosphorylation. Interacts with SDC3 (via heparan sulfate chains); this interaction mediates the neurite outgrowth-promoting signal from PTN to the cytoskeleton of growing neurites; this interaction mediates osteoblast recruitment. Interacts with GPC2 (via heparan sulfate); this interaction promotes neurite outgrowth through binding of PTN with chondroitin sulfate of proteoglycans, thereby releasing PTPRS of chondroitin sulfate proteoglycans (CSPGs) and leading to binding with heparan sulfate of GPC2. In terms of processing, phosphorylated by NEK6.

It is found in the secreted. In terms of biological role, secreted growth factor that mediates its signal through cell-surface proteoglycan and non-proteoglycan receptors. Binds cell-surface proteoglycan receptor via their chondroitin sulfate (CS) groups. Thereby regulates many processes like cell proliferation, cell survival, cell growth, cell differentiation and cell migration in several tissues namely neuron and bone. Also plays a role in synaptic plasticity and learning-related behavior by inhibiting long-term synaptic potentiation. Binds PTPRZ1, leading to neutralization of the negative charges of the CS chains of PTPRZ1, inducing PTPRZ1 clustering, thereby causing the dimerization and inactivation of its phosphatase activity leading to increased tyrosine phosphorylation of each of the PTPRZ1 substrates like ALK, CTNNB1 or AFAP1L2 in order to activate the PI3K-AKT pathway. Through PTPRZ1 binding controls oligodendrocyte precursor cell differentiation by enhancing the phosphorylation of AFAP1L2 in order to activate the PI3K-AKT pathway. Forms a complex with PTPRZ1 and integrin alpha-V/beta-3 (ITGAV:ITGB3) that stimulates endothelial cell migration through SRC dephosphorylation and activation that consequently leads to ITGB3 'Tyr-773' phosphorylation. In adult hippocampus promotes dendritic arborization, spine development, and functional integration and connectivity of newborn granule neurons through ALK by activating AKT signaling pathway. Binds GPC2 and chondroitin sulfate proteoglycans (CSPGs) at the neuron surface, leading to abrogation of binding between PTPRS and CSPGs and neurite outgrowth promotion. Binds SDC3 and mediates bone formation by recruiting and attaching osteoblasts/osteoblast precursors to the sites for new bone deposition. Binds ALK and promotes cell survival and cell proliferation through MAPK pathway activation. Inhibits proliferation and enhances differentiation of neural stem cells by inhibiting FGF2-induced fibroblast growth factor receptor signaling pathway. Mediates regulatory mechanisms in normal hemostasis and in hematopoietic regeneration and in maintaining the balance of myeloid and lymphoid regeneration. In addition may play a role in the female reproductive system, auditory response and the progesterone-induced decidualization pathway. In Bos taurus (Bovine), this protein is Pleiotrophin.